The primary structure comprises 351 residues: Pleckstrin (351 aa).

A PH 1 domain is found at 4–101; it reads KRIREGYLVK…WVRDTKKAIK (98 aa). Lys64 bears the N6-acetyllysine mark. Ser113 and Ser117 each carry phosphoserine. The DEP domain maps to 136–221; the sequence is IEKGIKELNL…NPDAFYYFPD (86 aa). A PH 2 domain is found at 244-348; the sequence is VIIKQGCLLK…WIKAIQVASR (105 aa).

In terms of biological role, major protein kinase C substrate of platelets. The sequence is that of Pleckstrin (PLEK) from Canis lupus familiaris (Dog).